The following is a 317-amino-acid chain: Probable methyltransferase tdiE (317 aa).

This sequence belongs to the methyltransferase superfamily. LaeA methyltransferase family.

The protein operates within secondary metabolite biosynthesis. Its function is as follows. Probable methyltransferase; part of the gene cluster that mediates the biosynthesis of terrequinone A, an antitumor agent. The first step in the biosynthetic pathway for terrequinone A is formation of indole pyruvic acid (IPA) from L-tryptophan by the aminotransferase tdiD. The nonribosomal peptide synthase tdiA then immediately converts unstable IPA to didemethylasterriquinone D (DDAQ D), via condensation of 2 IPA molecules. The symmetric connectivity of the 2 IPA molecules is thought to arise by head-to-tail dual Claisen condensations facilitated by the TE domain. TdiB then catalyzes reverse prenylation by transferring dimethylallyl diphosphate to carbon atom 2' of DDAQ D, to yield asterriquinone C-1. Finally, tdiC and tdiE enzymes robustly convert asterriquinone C-1 to terrequinone A via a transformation involving regular prenylation at carbon atom 5, which requires elimination of the hydroxy group on C-5. The chain is Probable methyltransferase tdiE from Emericella nidulans (strain FGSC A4 / ATCC 38163 / CBS 112.46 / NRRL 194 / M139) (Aspergillus nidulans).